A 445-amino-acid polypeptide reads, in one-letter code: Transcription activator AFTR-1 (445 aa).

A DNA-binding region (zn(2)-C6 fungal-type) is located at residues 17 to 44; sequence CDFCTQSKLRCNKNKPSCRRCTLQQQPC. The disordered stretch occupies residues 50–89; it reads RRTGRPPKHPRKANDCQEANGQHGDQDPVTSTPGGSYQQQ. Basic residues predominate over residues 51-60; that stretch reads RTGRPPKHPR. Residues 77 to 89 are compositionally biased toward polar residues; that stretch reads PVTSTPGGSYQQQ.

The protein resides in the nucleus. Functionally, transcription factor that regulates the expression of the gene clusters that mediate the biosynthesis of the host-selective toxins (HSTs) AF-toxins responsible for Alternaria black spot of strawberry disease by the strawberry pathotype. On cellular level, AF-toxins affect plasma membrane of susceptible cells and cause a sudden increase in loss of K(+) after a few minutes of toxin treatment. The chain is Transcription activator AFTR-1 from Alternaria alternata (Alternaria rot fungus).